The chain runs to 199 residues: Peroxiredoxin-1 (199 aa).

Residue Ser-2 is modified to N-acetylserine. The 160-residue stretch at 6-165 (AKIGYPAPNF…IIRLVQAFQF (160 aa)) folds into the Thioredoxin domain. Lys-7 is subject to N6-acetyllysine; alternate. Lys-7 participates in a covalent cross-link: Glycyl lysine isopeptide (Lys-Gly) (interchain with G-Cter in SUMO2); alternate. Lys-16 and Lys-27 each carry N6-acetyllysine. The residue at position 32 (Ser-32) is a Phosphoserine. Lys-35 carries the N6-acetyllysine; alternate modification. Residue Lys-35 is modified to N6-succinyllysine; alternate. The Cysteine sulfenic acid (-SOH) intermediate role is filled by Cys-52. Position 90 is a phosphothreonine (Thr-90). A Glycyl lysine isopeptide (Lys-Gly) (interchain with G-Cter in SUMO2) cross-link involves residue Lys-120. Lys-136 carries the post-translational modification N6-acetyllysine. Lys-185 participates in a covalent cross-link: Glycyl lysine isopeptide (Lys-Gly) (interchain with G-Cter in SUMO1). An N6-acetyllysine modification is found at Lys-197.

Belongs to the peroxiredoxin family. AhpC/Prx1 subfamily. Homodimer; disulfide-linked, upon oxidation. 5 homodimers assemble to form a ring-like decamer. Interacts with GDPD5; forms a mixed-disulfide with GDPD5. Interacts with SESN1 and SESN2. Interacts with FAM107A. Phosphorylated on Thr-90 during the M-phase, which leads to a decrease in enzymatic activity. Post-translationally, acetylation increases reducing activity and resistance to superoxidation. Deacetylated by HDAC6 which decreases reducing activity. As to expression, found in various tissues; high concentration in liver.

It is found in the cytoplasm. It catalyses the reaction a hydroperoxide + [thioredoxin]-dithiol = an alcohol + [thioredoxin]-disulfide + H2O. Thiol-specific peroxidase that catalyzes the reduction of hydrogen peroxide and organic hydroperoxides to water and alcohols, respectively. Plays a role in cell protection against oxidative stress by detoxifying peroxides and as sensor of hydrogen peroxide-mediated signaling events. Might participate in the signaling cascades of growth factors and tumor necrosis factor-alpha by regulating the intracellular concentrations of H(2)O(2). Reduces an intramolecular disulfide bond in GDPD5 that gates the ability to GDPD5 to drive postmitotic motor neuron differentiation. The chain is Peroxiredoxin-1 (Prdx1) from Mus musculus (Mouse).